The chain runs to 145 residues: NADH-quinone oxidoreductase subunit A 1 (145 aa).

The next 3 membrane-spanning stretches (helical) occupy residues 18–38 (ILPLGLYVAATVLLIGILLLA), 71–91 (VPFYLVAIFFIVFDVEAVFIF), and 104–124 (GLIHITAFIIVLLLGLVWLWL).

The protein belongs to the complex I subunit 3 family. NDH-1 is composed of 14 different subunits. Subunits NuoA, H, J, K, L, M, N constitute the membrane sector of the complex.

It localises to the cell inner membrane. It catalyses the reaction a quinone + NADH + 5 H(+)(in) = a quinol + NAD(+) + 4 H(+)(out). Its function is as follows. NDH-1 shuttles electrons from NADH, via FMN and iron-sulfur (Fe-S) centers, to quinones in the respiratory chain. The immediate electron acceptor for the enzyme in this species is believed to be ubiquinone. Couples the redox reaction to proton translocation (for every two electrons transferred, four hydrogen ions are translocated across the cytoplasmic membrane), and thus conserves the redox energy in a proton gradient. This Geotalea uraniireducens (strain Rf4) (Geobacter uraniireducens) protein is NADH-quinone oxidoreductase subunit A 1.